Consider the following 295-residue polypeptide: ATP synthase gamma chain (295 aa).

This sequence belongs to the ATPase gamma chain family. In terms of assembly, F-type ATPases have 2 components, CF(1) - the catalytic core - and CF(0) - the membrane proton channel. CF(1) has five subunits: alpha(3), beta(3), gamma(1), delta(1), epsilon(1). CF(0) has three main subunits: a, b and c.

It is found in the cell membrane. In terms of biological role, produces ATP from ADP in the presence of a proton gradient across the membrane. The gamma chain is believed to be important in regulating ATPase activity and the flow of protons through the CF(0) complex. The polypeptide is ATP synthase gamma chain (Desulforudis audaxviator (strain MP104C)).